The following is a 280-amino-acid chain: F420-dependent methylenetetrahydromethanopterin dehydrogenase (280 aa).

Belongs to the MTD family.

The catalysed reaction is 5,10-methylenetetrahydromethanopterin + oxidized coenzyme F420-(gamma-L-Glu)(n) + 2 H(+) = 5,10-methenyl-5,6,7,8-tetrahydromethanopterin + reduced coenzyme F420-(gamma-L-Glu)(n). The protein operates within one-carbon metabolism; methanogenesis from CO(2); 5,10-methylene-5,6,7,8-tetrahydromethanopterin from 5,10-methenyl-5,6,7,8-tetrahydromethanopterin (coenzyme F420 route): step 1/1. Its function is as follows. Catalyzes the reversible reduction of methenyl-H(4)MPT(+) to methylene-H(4)MPT. This chain is F420-dependent methylenetetrahydromethanopterin dehydrogenase, found in Methanosphaerula palustris (strain ATCC BAA-1556 / DSM 19958 / E1-9c).